Reading from the N-terminus, the 231-residue chain is Small ribosomal subunit protein uS3 (231 aa).

The KH type-2 domain occupies 39 to 107 (IRKYIVENLP…DVKLNIVEIR (69 aa)).

Belongs to the universal ribosomal protein uS3 family. Part of the 30S ribosomal subunit. Forms a tight complex with proteins S10 and S14.

Functionally, binds the lower part of the 30S subunit head. Binds mRNA in the 70S ribosome, positioning it for translation. This chain is Small ribosomal subunit protein uS3, found in Novosphingobium aromaticivorans (strain ATCC 700278 / DSM 12444 / CCUG 56034 / CIP 105152 / NBRC 16084 / F199).